The sequence spans 424 residues: MRNEIQNETAQTDQTQGSMFSFFNLFPFLLPMFEVIKMVVASVASVVYLGFAGVTLSGSAVALAVSTPLFIIFSPILLPAIAATTVLAAGLGSKKVAAAPAASPSLSLLGIPESIKPSNVIPESIKPSNIIPESIKPSNIIPVSIKPSNIKDKIKDTIGKVKNKIKAKQEEKSKGKSEDSSKGKGKSKGEDTTTDEDKHGKGESKHGKGESKHGKGESTHGKGGKHGSEGSSMDEGKHGGKHGSGGSPMGGGKHGSGGKHESGGSPMGGGKHGSGGKHESGGASMGGGKHESVGKHGSGGKHESGGSPMGGGKHGSGGKHESGGASMGGGKHGSGGRHEGGGSAMGGGKHGSGGKHGSEGKHGGEGSSMGKNSLSKNKKEFHYRGQAMDASSTSESSDGSSSDGSSSDGSSSDGSSHGSGGKHI.

The tract at residues 1–37 is polar; sequence MRNEIQNETAQTDQTQGSMFSFFNLFPFLLPMFEVIK. The next 3 helical transmembrane spans lie at 16-36, 38-58, and 69-89; these read QGSMFSFFNLFPFLLPMFEVI, MVVASVASVVYLGFAGVTLSG, and LFIIFSPILLPAIAATTVLAA. Residues 38-119 are hydrophobic; that stretch reads MVVASVASVV…GIPESIKPSN (82 aa). 18 tandem repeats follow at residues 111–120, 121–130, 131–140, 141–150, 196–202, 203–209, 210–216, 217–223, 241–258, 259–276, 277–294, 301–318, 319–336, 337–354, 396–400, 401–405, 406–410, and 411–415. Residues 111–150 are 4 X 10 AA tandem repeats of I-P-[EV]-S-I-K-P-S-N-[IV]; that stretch reads IPESIKPSNVIPESIKPSNIIPESIKPSNIIPVSIKPSNI. The disordered stretch occupies residues 164 to 424; that stretch reads KIKAKQEEKS…SSHGSGGKHI (261 aa). The span at 167 to 220 shows a compositional bias: basic and acidic residues; that stretch reads AKQEEKSKGKSEDSSKGKGKSKGEDTTTDEDKHGKGESKHGKGESKHGKGESTH. A 4 X 7 AA tandem repeats of E-[SD]-[KT]-H-G-K-G region spans residues 196–223; that stretch reads EDKHGKGESKHGKGESKHGKGESTHGKG. Residues 241-354 form a 6 X 18 AA tandem repeats of [KR]-H-[EG]-[SG]-G-G-[SA]-[PSA]-M-G-G-G-K-H-[GE]-S-[GV]-G region; that stretch reads KHGSGGSPMG…MGGGKHGSGG (114 aa). Over residues 242–255 the composition is skewed to gly residues; the sequence is HGSGGSPMGGGKHG. The span at 288 to 304 shows a compositional bias: basic and acidic residues; that stretch reads GKHESVGKHGSGGKHES. The segment covering 341-355 has biased composition (gly residues); that stretch reads GGSAMGGGKHGSGGK. Positions 391–416 are enriched in low complexity; the sequence is SSTSESSDGSSSDGSSSDGSSSDGSS. Residues 396–415 are 4 X 5 AA tandem repeats of S-S-D-G-S; it reads SSDGSSSDGSSSDGSSSDGS.

This sequence belongs to the oleosin family. In terms of tissue distribution, the full-length protein is found in the tapetal lipid bodies of immature anthers, the proteolytically cleaved C-terminal product is found on the coats of pollen grains. No expression is detected in other flower organs, siliques or seedlings.

It localises to the lipid droplet. The protein resides in the membrane. Functionally, many of the major pollen coat proteins are derived from endoproteolytic cleavage of oleosin-like proteins. This is Oleosin-B3 from Brassica napus (Rape).